The primary structure comprises 69 residues: DNA-directed RNA polymerase subunit epsilon (69 aa).

The protein belongs to the RNA polymerase subunit epsilon family. As to quaternary structure, monomer. RNAP is composed of a core of 2 alpha, a beta and a beta' subunit. The core is associated with a delta subunit, and at least one of epsilon or omega. When a sigma factor is associated with the core the holoenzyme is formed, which can initiate transcription.

The protein localises to the cytoplasm. It is found in the nucleoid. It catalyses the reaction RNA(n) + a ribonucleoside 5'-triphosphate = RNA(n+1) + diphosphate. Its function is as follows. A non-essential component of RNA polymerase (RNAP). Has a similar structure to bacteriophage T7 protein Gp2 (AC P03704), which is known to bind to RNAP in the DNA binding-cleft. Unlike Gp2 however, this protein does not inhibit transcription initiation. In vitro reconstitution experiments show this subunit is dispensible. In Bacillus subtilis (strain 168), this protein is DNA-directed RNA polymerase subunit epsilon.